A 249-amino-acid polypeptide reads, in one-letter code: Putative type I specificity subunit S.MpnORF615P (249 aa).

The protein belongs to the type-I restriction system S methylase family. The methyltransferase is composed of M and S polypeptides.

The specificity (S) subunit of a type I methyltransferase (MTase); this subunit dictates DNA sequence specificity. The single R subunit has multiple frameshifts and is probably not expressed. The polypeptide is Putative type I specificity subunit S.MpnORF615P (Mycoplasma pneumoniae (strain ATCC 29342 / M129 / Subtype 1) (Mycoplasmoides pneumoniae)).